Here is a 264-residue protein sequence, read N- to C-terminus: Somatomedin-B and thrombospondin type-1 domain-containing protein (264 aa).

The first 20 residues, 1–20 (MKTLWMVLCALARLWPGALA), serve as a signal peptide directing secretion. Positions 24–75 (EAGRCCPGRDPACFARGWRLDRVYGTCFCDQACRLTGDCCFDYDRACPARPC) constitute an SMB domain. Cystine bridges form between C28–C36, C28–C52, C36–C70, C50–C52, C50–C63, C56–C62, and C63–C70. Positions 74–125 (PCFVGEWSPWSGCAGQCQPTTRVRRRSVRQEPLNGGAPCPPLEERAGCLEYS) constitute a TSP type-1 domain. N-linked (GlcNAc...) asparagine glycosylation is present at N227.

The protein belongs to the thrombospondin family.

It is found in the secreted. It localises to the extracellular space. Its subcellular location is the extracellular matrix. This Mus musculus (Mouse) protein is Somatomedin-B and thrombospondin type-1 domain-containing protein (Sbspon).